We begin with the raw amino-acid sequence, 703 residues long: Zinc finger protein 750 (703 aa).

The CCHC-type zinc-finger motif lies at 25–51 (YKCFQCPFTCNEKSHLFNHMKYGLCKN). 4 residues coordinate Zn(2+): Cys27, Cys30, His43, and Cys49. Disordered stretches follow at residues 64–113 (KCPK…DAKE), 350–527 (PASS…YGPM), 553–614 (WAPR…KQTA), and 630–703 (RVAD…TRVS). Residues 67 to 106 (KSSSLDPKQTHQPEPTSKPATSKSLLNGLSSFDPKSQQGS) are compositionally biased toward polar residues. Positions 352–361 (SSPSELNLSS) are enriched in low complexity. The span at 367–394 (TECEKGSPVPEAKDPSKDGQRDAEEAKM) shows a compositional bias: basic and acidic residues. 2 stretches are compositionally biased toward polar residues: residues 410 to 421 (SPTNFTQTSQTF) and 456 to 477 (GSES…SLQA). Positions 574-611 (TETKGSEDRTSRVETPQDKAHSRTTPDVHTEDSSDEQK) are enriched in basic and acidic residues. The segment covering 639 to 655 (QEPTRQDVPTLSATENL) has biased composition (polar residues).

The protein localises to the nucleus. In terms of biological role, transcription factor involved in epidermis differentiation. Required for terminal epidermal differentiation: acts downstream of p63/TP63 and activates expression of late epidermal differentiation genes. Specifically binds to the promoter of KLF4 and promotes its expression. The chain is Zinc finger protein 750 (Znf750) from Mus musculus (Mouse).